The sequence spans 202 residues: Nucleoside triphosphate pyrophosphatase (202 aa).

Catalysis depends on D79, which acts as the Proton acceptor.

The protein belongs to the Maf family. Requires a divalent metal cation as cofactor.

It localises to the cytoplasm. It carries out the reaction a ribonucleoside 5'-triphosphate + H2O = a ribonucleoside 5'-phosphate + diphosphate + H(+). The catalysed reaction is a 2'-deoxyribonucleoside 5'-triphosphate + H2O = a 2'-deoxyribonucleoside 5'-phosphate + diphosphate + H(+). Nucleoside triphosphate pyrophosphatase. May have a dual role in cell division arrest and in preventing the incorporation of modified nucleotides into cellular nucleic acids. The sequence is that of Nucleoside triphosphate pyrophosphatase from Rhodopseudomonas palustris (strain HaA2).